A 644-amino-acid polypeptide reads, in one-letter code: uncharacterized protein (644 aa).

254–261 lines the ATP pocket; sequence GKMGAGKS.

This is an uncharacterized protein from Bacillus anthracis.